The primary structure comprises 323 residues: tRNA U34 carboxymethyltransferase (323 aa).

Residues Lys-91, Trp-105, Lys-110, Gly-130, 181–182, Met-196, Tyr-200, and Arg-315 contribute to the carboxy-S-adenosyl-L-methionine site; that span reads IE.

Belongs to the class I-like SAM-binding methyltransferase superfamily. CmoB family. As to quaternary structure, homotetramer.

The catalysed reaction is carboxy-S-adenosyl-L-methionine + 5-hydroxyuridine(34) in tRNA = 5-carboxymethoxyuridine(34) in tRNA + S-adenosyl-L-homocysteine + H(+). Its function is as follows. Catalyzes carboxymethyl transfer from carboxy-S-adenosyl-L-methionine (Cx-SAM) to 5-hydroxyuridine (ho5U) to form 5-carboxymethoxyuridine (cmo5U) at position 34 in tRNAs. The polypeptide is tRNA U34 carboxymethyltransferase (Yersinia pseudotuberculosis serotype O:1b (strain IP 31758)).